We begin with the raw amino-acid sequence, 1484 residues long: Chromatin-remodeling ATPase INO80 (1484 aa).

3 disordered regions span residues 149-193 (VKTP…GHKD), 237-353 (EANR…KIVT), and 426-466 (LQEE…DLDG). Residues 155–171 (INDHGNRSKASRSDTTN) are compositionally biased toward basic and acidic residues. Composition is skewed to polar residues over residues 172-187 (KTDNTMAGINSPTSDV), 241-250 (IGSNMQNSDQ), and 261-285 (DPSSDIDSDANTSVNDGSDENLSNK). Basic and acidic residues-rich tracts occupy residues 286-295 (LDSDDLHSEP) and 426-439 (LQEEAKQIADQESP). The stretch at 404 to 462 (KQMHVKKLKKILQDARKAEEKRLQEEAKQIADQESPRKRRKIDRSENTKQEDEDDKEDD) forms a coiled coil. Residues 454-465 (EDEDDKEDDDLD) show a composition bias toward acidic residues. Residues 493-618 (IWKDMARKDC…SHFIGRKIKT (126 aa)) form the DBINO domain. Residues 673 to 702 (ETRAKAKAFDDAHRQQQSTESDDEEEMNFQ) form a disordered region. Basic and acidic residues predominate over residues 674 to 686 (TRAKAKAFDDAHR). The 173-residue stretch at 734 to 906 (ANLYDQGING…WALLHFIMPS (173 aa)) folds into the Helicase ATP-binding domain. An ATP-binding site is contributed by 747-754 (DEMGLGKT). The short motif at 857–860 (DEAQ) is the DEAQ box element. A Helicase C-terminal domain is found at 1299–1463 (KLDELLVELK…TTHTRPEHEQ (165 aa)). A disordered region spans residues 1446-1484 (KTKDTNIQTTHTRPEHEQLTPKSLSSEPEATNNLITVKN). Polar residues predominate over residues 1465–1484 (TPKSLSSEPEATNNLITVKN).

This sequence belongs to the SNF2/RAD54 helicase family. Component of the INO80 chromatin-remodeling complex.

The protein resides in the nucleus. It carries out the reaction ATP + H2O = ADP + phosphate + H(+). In terms of biological role, ATPase component of the INO80 complex which remodels chromatin by shifting nucleosomes and is involved in DNA repair. The protein is Chromatin-remodeling ATPase INO80 (INO80) of Candida glabrata (strain ATCC 2001 / BCRC 20586 / JCM 3761 / NBRC 0622 / NRRL Y-65 / CBS 138) (Yeast).